A 524-amino-acid polypeptide reads, in one-letter code: REH2-associated factor 1 (524 aa).

A mitochondrion-targeting transit peptide spans 1 to 22; the sequence is MRRWLVASMAPQLHQLLQPVRR. The segment at 48-70 adopts a C2H2-type 1; atypical zinc-finger fold; it reads ASCPACSRVVHMCDMLTHLITAH. The C2H2-type 2; atypical zinc finger occupies 121–147; the sequence is YMCNWCDRRSDVYATRDKFLKHVADVH. A C2H2-type 4 zinc finger spans residues 226-249; that stretch reads FPCELCNRTFNSEIDLLQHLETRH. Residues 286-312 form a C2H2-type 3; atypical zinc finger; it reads VICDLCVSSSKVYKMPSALFSHIRFKH. 4 C2H2-type zinc fingers span residues 334 to 357, 376 to 399, 406 to 429, and 443 to 465; these read FVCT…NSKH, WWCH…QNKH, HPCP…SLQH, and VKCS…AVKH. Residues 463–524 form a disordered region; it reads VKHHKKDPRA…KTTEVSEVTS (62 aa). Positions 479–500 are enriched in low complexity; sequence APTSASHVAASTSAAVPSEVEA.

As to quaternary structure, component of the REH2-associated complex (REH2C) composed of helicase REH2, associated factors H2F1 and H2F2, and mRNAs at various editing stages; the formation of the complex is RNA-independent. Within the complex, interacts with REH2; the interaction is direct. Interacts with various editing complexes including the RNA editing core (RECC) complex, the gRNA-binding (GRBC) complex (also known as the MRB1 complex) and the RNA editing mediator (REMC) complex.

Its subcellular location is the mitochondrion. Functionally, plays an important role in mitochondrial mRNA editing by promoting the assembly of the mRNA editosome. Facilitates the recruitment of mRNA to the REH2C complex and promotes the interaction between various editing complexes including REH2C, GRBC, REMC and RECC complexes. The chain is REH2-associated factor 1 from Trypanosoma brucei brucei (strain 927/4 GUTat10.1).